The primary structure comprises 614 residues: Probable glutamate--tRNA ligase, cytoplasmic (614 aa).

Residue 130 to 132 (RFA) participates in L-glutamate binding. The short motif at 135–144 (PSGCLHIGHL) is the 'HIGH' region element. His-140 serves as a coordination point for ATP. L-glutamate-binding positions include Asp-166, 303–307 (YDFVC), and Arg-321. Residues Glu-324 and 359-363 (VLSKR) contribute to the ATP site. Positions 359–363 (VLSKR) match the 'KMSKS' region motif.

The protein belongs to the class-I aminoacyl-tRNA synthetase family. Glutamate--tRNA ligase type 2 subfamily.

Its subcellular location is the cytoplasm. It catalyses the reaction tRNA(Glu) + L-glutamate + ATP = L-glutamyl-tRNA(Glu) + AMP + diphosphate. The polypeptide is Probable glutamate--tRNA ligase, cytoplasmic (Vairimorpha ceranae (strain BRL01) (Microsporidian parasite)).